The primary structure comprises 100 residues: Urease subunit gamma (100 aa).

It belongs to the urease gamma subunit family. In terms of assembly, heterotrimer of UreA (gamma), UreB (beta) and UreC (alpha) subunits. Three heterotrimers associate to form the active enzyme.

Its subcellular location is the cytoplasm. The enzyme catalyses urea + 2 H2O + H(+) = hydrogencarbonate + 2 NH4(+). Its pathway is nitrogen metabolism; urea degradation; CO(2) and NH(3) from urea (urease route): step 1/1. In Methylocella silvestris (strain DSM 15510 / CIP 108128 / LMG 27833 / NCIMB 13906 / BL2), this protein is Urease subunit gamma.